A 320-amino-acid chain; its full sequence is Beta-sarcoglycan (320 aa).

The span at 1–10 (MAAAAAAAAA) shows a compositional bias: low complexity. Residues 1–34 (MAAAAAAAAATEQQSSNGPVKKSMREKAVERRNV) are disordered. At 1-67 (MAAAAAAAAA…GLRGRKGNLA (67 aa)) the chain is on the cytoplasmic side. Positions 23–34 (SMREKAVERRNV) are enriched in basic and acidic residues. A helical; Signal-anchor for type II membrane protein membrane pass occupies residues 68-88 (ICVIVLLFILAVINLLITLVI). Topologically, residues 89–320 (WAVIRIGPNG…VADNPCGNTH (232 aa)) are extracellular. N160, N213, and N260 each carry an N-linked (GlcNAc...) asparagine glycan. Intrachain disulfides connect C290-C316 and C292-C309.

This sequence belongs to the sarcoglycan beta/delta/gamma/zeta family. As to quaternary structure, cross-link to form 2 major subcomplexes: one consisting of SGCB, SGCD and SGCG and the other consisting of SGCB and SGCD. The association between SGCB and SGCG is particularly strong while SGCA is loosely associated with the other sarcoglycans. In terms of processing, disulfide bonds are present.

Its subcellular location is the cell membrane. It is found in the sarcolemma. The protein resides in the cytoplasm. It localises to the cytoskeleton. Its function is as follows. Component of the sarcoglycan complex, a subcomplex of the dystrophin-glycoprotein complex which forms a link between the F-actin cytoskeleton and the extracellular matrix. This Mesocricetus auratus (Golden hamster) protein is Beta-sarcoglycan (SGCB).